Reading from the N-terminus, the 794-residue chain is Phenylalanine--tRNA ligase beta subunit (794 aa).

The tRNA-binding domain occupies 39–148 (APAFDNVVVA…SDAPVGQAIR (110 aa)). The B5 domain maps to 399–474 (PVRKPVLLRT…RLYGYDNIPS (76 aa)). Residues Asp-452, Asp-458, Glu-461, and Glu-462 each contribute to the Mg(2+) site. The FDX-ACB domain occupies 700 to 793 (SKFPPVIRDL…FEQAFGAQLR (94 aa)).

The protein belongs to the phenylalanyl-tRNA synthetase beta subunit family. Type 1 subfamily. In terms of assembly, tetramer of two alpha and two beta subunits. Mg(2+) is required as a cofactor.

The protein localises to the cytoplasm. The catalysed reaction is tRNA(Phe) + L-phenylalanine + ATP = L-phenylalanyl-tRNA(Phe) + AMP + diphosphate + H(+). In Dechloromonas aromatica (strain RCB), this protein is Phenylalanine--tRNA ligase beta subunit.